The primary structure comprises 235 residues: MDKKILVVDDEKPIADILEFNLRKEGYEVHCAHDGNEAVEMVEELQPDLILLDIMLPNKDGVEVCREVRKKYDMPIIMLTAKDSEIDKVIGLEIGADDYVTKPFSTRELLARVKANLRRQLTTAPAEEEPSSNEIHIGSLVIFPDAYVVSKRDETIELTHREFELLHYLAKHIGQVMTREHLLQTVWGYDYFGDVRTVDVTVRRLREKIEDNPSHPNWIVTRRGVGYYLRNPEQD.

Positions Lys-4 to Leu-117 constitute a Response regulatory domain. Asp-53 carries the post-translational modification 4-aspartylphosphate. The ompR/PhoB-type DNA-binding region spans Ser-132–Asn-231.

As to quaternary structure, homodimer. Post-translationally, phosphorylated by WalK.

The protein localises to the cytoplasm. Functionally, member of the two-component regulatory system WalK/WalR involved in the regulation of the ftsAZ operon, the yocH, ykvT, cwlO, lytE, ydjM, yjeA, yoeB genes and the tagAB and tagDEF operons. Binds to the ftsAZ P1 promoter sequence in vitro. WalR has been shown to directly bind to the regulatory regions of yocH, ykvT, tagAB/tagDEF. Activates cwlO, lytE and ydjM and represses yoeB and yjeA. The sequence is that of Transcriptional regulatory protein WalR from Bacillus subtilis (strain 168).